Here is a 1130-residue protein sequence, read N- to C-terminus: Serine/threonine-protein kinase LATS1 (1130 aa).

Basic and acidic residues predominate over residues 1-11 (MKRSEKPEGYR). Residues 1 to 71 (MKRSEKPEGY…PRQVRNPPKF (71 aa)) are disordered. The segment covering 19–30 (PASNYTVSSRQM) has biased composition (polar residues). Positions 46–64 (DAAKAEHNMSKMSTEDPRQ) are enriched in basic and acidic residues. A UBA domain is found at 100–141 (EVNPQMLQDLQAAGFDEDMVIQALQKTNNRSIEAAIEFISKM). The interval 149 to 276 (EQMAAAAARP…SWEPNSQTKR (128 aa)) is disordered. Over residues 167–179 (NVQQSVNRKQSWK) the composition is skewed to polar residues. The segment covering 235–268 (NPPPPPQVRSVTPPPPPRGQTPPPRGTTPPPPSW) has biased composition (pro residues). At Thr246 the chain carries Phosphothreonine. Ser278 carries the post-translational modification Phosphoserine. 4 disordered regions span residues 294-321 (GAWQ…RGIS), 365-405 (AGTV…NGSI), 432-484 (NWPQ…PSAT), and 515-631 (THPS…ESRI). Over residues 300–312 (YPPPPLNTSPMNP) the composition is skewed to pro residues. The PPxY motif 1 signature appears at 373 to 376 (PPPY). Polar residues predominate over residues 381–405 (ANGQSPSALQTGGSAAPSSYTNGSI). Low complexity predominate over residues 434-447 (PQSSSAPAQSSPSS). Positions 454–482 (WQPNIPVRSNSFNNPLGNRASHSANSQPS) are enriched in polar residues. The residue at position 464 (Ser464) is a Phosphoserine; by NUAK1 and NUAK2. Positions 526–655 (TVQPSPFPEG…HVENVLKSHQ (130 aa)) are interaction with YAP1. The PPxY motif 2 motif lies at 556 to 559 (PPPY). Residues 579-609 (PSKEDQPSLPKEDESEKSYENVDSGDKEKKQ) show a composition bias toward basic and acidic residues. A Phosphoserine modification is found at Ser613. The span at 621–630 (KKDEERRESR) shows a compositional bias: basic and acidic residues. Position 674 is a phosphoserine (Ser674). The Protein kinase domain occupies 705–1010 (FVKIKTLGIG…ADEIKAHPFF (306 aa)). ATP is bound by residues 711 to 719 (LGIGAFGEV) and Lys734. Residue Asp828 is the Proton acceptor of the active site. Residue Ser909 is modified to Phosphoserine; by STK3/MST2. Positions 1011 to 1090 (KTIDFSSDLR…RRFFDDNGYP (80 aa)) constitute an AGC-kinase C-terminal domain. At Thr1079 the chain carries Phosphothreonine; by STK3/MST2. The segment at 1104 to 1130 (SQGSEQQSDEDDQNTGSEIKNRDLVYV) is disordered.

It belongs to the protein kinase superfamily. AGC Ser/Thr protein kinase family. As to quaternary structure, complexes with CDK1 in early mitosis. LATS1-associated CDK1 has no mitotic cyclin partner and no apparent kinase activity. Binds phosphorylated ZYX, locating this protein to the mitotic spindle and suggesting a role for actin regulatory proteins during mitosis. Binds to and colocalizes with LIMK1 at the actomyosin contractile ring during cytokinesis. Interacts (via PPxY motif 2) with YAP1 (via WW domains). Interacts with MOB1A and MOB1B. Interacts with LIMD1, WTIP and AJUBA. Interacts with ESR1, DCAF1 and DCAF13; probably recruits DCAF1 and DCAF13 to ESR1 to promote ESR1 ubiquitination and ubiquitin-mediated proteasomal degradation. Interacts with STK3/MST2; this interaction is inhibited in the presence of DLG5. Interacts with SCRIB in the presence of DLG5. Interacts with WWTR1/TAZ. Interacts with WWC1, WWC2 and WWC3 (via their WW domains). It depends on Mg(2+) as a cofactor. In terms of processing, autophosphorylated and phosphorylated during M-phase of the cell cycle. Phosphorylated by STK3/MST2 at Ser-909 and Thr-1079, which results in its activation. Phosphorylated by MAP4Ks; in parallel to STK3/MST2 and resulting to its activation. Phosphorylation at Ser-464 by NUAK1 and NUAK2 leads to decreased protein level and is required to regulate cellular senescence and cellular ploidy. Expressed in all adult tissues examined except for lung and kidney.

Its subcellular location is the cytoplasm. It localises to the cytoskeleton. It is found in the microtubule organizing center. The protein localises to the centrosome. The protein resides in the spindle. Its subcellular location is the midbody. It localises to the spindle pole body. The catalysed reaction is L-seryl-[protein] + ATP = O-phospho-L-seryl-[protein] + ADP + H(+). The enzyme catalyses L-threonyl-[protein] + ATP = O-phospho-L-threonyl-[protein] + ADP + H(+). Its function is as follows. Negative regulator of YAP1 in the Hippo signaling pathway that plays a pivotal role in organ size control and tumor suppression by restricting proliferation and promoting apoptosis. The core of this pathway is composed of a kinase cascade wherein STK3/MST2 and STK4/MST1, in complex with its regulatory protein SAV1, phosphorylates and activates LATS1/2 in complex with its regulatory protein MOB1, which in turn phosphorylates and inactivates YAP1 oncoprotein and WWTR1/TAZ. Phosphorylation of YAP1 by LATS1 inhibits its translocation into the nucleus to regulate cellular genes important for cell proliferation, cell death, and cell migration. Acts as a tumor suppressor which plays a critical role in maintenance of ploidy through its actions in both mitotic progression and the G1 tetraploidy checkpoint. Negatively regulates G2/M transition by down-regulating CDK1 kinase activity. Involved in the control of p53 expression. Affects cytokinesis by regulating actin polymerization through negative modulation of LIMK1. May also play a role in endocrine function. Plays a role in mammary gland epithelial cell differentiation, both through the Hippo signaling pathway and the intracellular estrogen receptor signaling pathway by promoting the degradation of ESR1. Acts as an activator of the NLRP3 inflammasome by mediating phosphorylation of 'Ser-265' of NLRP3 following NLRP3 palmitoylation, promoting NLRP3 activation by NEK7. The polypeptide is Serine/threonine-protein kinase LATS1 (Homo sapiens (Human)).